A 428-amino-acid polypeptide reads, in one-letter code: 3-phosphoshikimate 1-carboxyvinyltransferase (428 aa).

3 residues coordinate 3-phosphoshikimate: K22, S23, and R27. A phosphoenolpyruvate-binding site is contributed by K22. Positions 96 and 124 each coordinate phosphoenolpyruvate. Positions 169, 170, 171, 197, 313, 336, and 340 each coordinate 3-phosphoshikimate. Residue Q171 coordinates phosphoenolpyruvate. D313 (proton acceptor) is an active-site residue. R344, R386, and K411 together coordinate phosphoenolpyruvate.

Belongs to the EPSP synthase family. As to quaternary structure, monomer.

It localises to the cytoplasm. It catalyses the reaction 3-phosphoshikimate + phosphoenolpyruvate = 5-O-(1-carboxyvinyl)-3-phosphoshikimate + phosphate. It functions in the pathway metabolic intermediate biosynthesis; chorismate biosynthesis; chorismate from D-erythrose 4-phosphate and phosphoenolpyruvate: step 6/7. Its function is as follows. Catalyzes the transfer of the enolpyruvyl moiety of phosphoenolpyruvate (PEP) to the 5-hydroxyl of shikimate-3-phosphate (S3P) to produce enolpyruvyl shikimate-3-phosphate and inorganic phosphate. The sequence is that of 3-phosphoshikimate 1-carboxyvinyltransferase from Proteus mirabilis (strain HI4320).